A 141-amino-acid polypeptide reads, in one-letter code: Large ribosomal subunit protein uL16 (141 aa).

The segment at 1-21 (MLMPKRVKYRKQQRGHNRGMA) is disordered.

It belongs to the universal ribosomal protein uL16 family. Part of the 50S ribosomal subunit.

Its function is as follows. Binds 23S rRNA and is also seen to make contacts with the A and possibly P site tRNAs. This chain is Large ribosomal subunit protein uL16, found in Roseiflexus castenholzii (strain DSM 13941 / HLO8).